A 458-amino-acid chain; its full sequence is Probable threonine--tRNA ligase, cytoplasmic (458 aa).

Residues 41–104 (DPIKITLLPD…EGDCSLEIFG (64 aa)) enclose the TGS domain.

Belongs to the class-II aminoacyl-tRNA synthetase family.

Its subcellular location is the cytoplasm. The enzyme catalyses tRNA(Thr) + L-threonine + ATP = L-threonyl-tRNA(Thr) + AMP + diphosphate + H(+). This Arabidopsis thaliana (Mouse-ear cress) protein is Probable threonine--tRNA ligase, cytoplasmic.